The primary structure comprises 593 residues: Glutamyl-tRNA(Gln) amidotransferase subunit B, mitochondrial (593 aa).

The transit peptide at 1 to 49 directs the protein to the mitochondrion; it reads MLRPWLRQSTRAARSLPCCQCPRPYSSRLPTLTSPSSSVRRLQTSASES. A compositionally biased stretch (low complexity) spans 27-42; sequence SRLPTLTSPSSSVRRL. The disordered stretch occupies residues 27–80; the sequence is SRLPTLTSPSSSVRRLQTSASESQDRVPLRKQLKQNAKALKAEKRQRRESEEAS. A compositionally biased stretch (basic and acidic residues) spans 66-80; the sequence is LKAEKRQRRESEEAS.

It belongs to the GatB/GatE family. GatB subfamily. As to quaternary structure, subunit of the heterotrimeric GatCAB amidotransferase (AdT) complex, composed of A, B and C subunits.

It is found in the mitochondrion. The catalysed reaction is L-glutamyl-tRNA(Gln) + L-glutamine + ATP + H2O = L-glutaminyl-tRNA(Gln) + L-glutamate + ADP + phosphate + H(+). In terms of biological role, allows the formation of correctly charged Gln-tRNA(Gln) through the transamidation of misacylated Glu-tRNA(Gln) in the mitochondria. The reaction takes place in the presence of glutamine and ATP through an activated gamma-phospho-Glu-tRNA(Gln). In Aspergillus oryzae (strain ATCC 42149 / RIB 40) (Yellow koji mold), this protein is Glutamyl-tRNA(Gln) amidotransferase subunit B, mitochondrial.